The sequence spans 523 residues: Tryptamine 5-hydroxylase (523 aa).

A helical transmembrane segment spans residues 5-25; that stretch reads MASTMSLALLVLSAAYVLVAL. Cysteine 453 contributes to the heme binding site.

The protein belongs to the cytochrome P450 family. Heme is required as a cofactor.

It is found in the endoplasmic reticulum membrane. The enzyme catalyses tryptamine + reduced [NADPH--hemoprotein reductase] + O2 = serotonin + oxidized [NADPH--hemoprotein reductase] + H2O + H(+). Functionally, involved in serotonin biosynthesis. Catalyzes the conversion of tryptamine to serotonin. Accumulation of serotonin may play a role in innate immunity. The sequence is that of Tryptamine 5-hydroxylase from Oryza sativa subsp. japonica (Rice).